The following is a 308-amino-acid chain: Ribosomal RNA large subunit methyltransferase F (308 aa).

It belongs to the methyltransferase superfamily. METTL16/RlmF family.

The protein localises to the cytoplasm. It catalyses the reaction adenosine(1618) in 23S rRNA + S-adenosyl-L-methionine = N(6)-methyladenosine(1618) in 23S rRNA + S-adenosyl-L-homocysteine + H(+). Functionally, specifically methylates the adenine in position 1618 of 23S rRNA. The polypeptide is Ribosomal RNA large subunit methyltransferase F (Salmonella agona (strain SL483)).